The following is a 305-amino-acid chain: MLRIFQGRPAVTIAAVLVAASVAGCAGKAKKPTLVYEERPVELLYSTGADRLDRGNWNEAVDYFREVERQHPYSEWSRRSILMTGYAHYMGNQYAEAIGDADRFISLYPGNPSAQYAFYLKAICYFEQIVDVNRDQAATEQALAALRDVVQRYPNTEYATDARLKIDMVNDQLAGKEMAIGRWYLKNGQTLAAIGRFKAVIERHQTTSHTPEALFRLVEAYLTIGLNEEAKRNGAVLGYNFPGDRWYVDAYRLLNDNGLRPAVEPLKAGAKRNALERILSKDKEATLAPPGERKAKKGLLGPLGM.

An N-terminal signal peptide occupies residues 1–24 (MLRIFQGRPAVTIAAVLVAASVAG). A lipid anchor (N-palmitoyl cysteine) is attached at cysteine 25. A lipid anchor (S-diacylglycerol cysteine) is attached at cysteine 25. 4 TPR repeats span residues 41-74 (VELL…HPYS), 78-111 (RRSI…YPGN), 113-136 (SAQY…NRDQ), and 174-207 (AGKE…HQTT).

It belongs to the BamD family. As to quaternary structure, part of the Bam complex.

It localises to the cell outer membrane. Its function is as follows. Part of the outer membrane protein assembly complex, which is involved in assembly and insertion of beta-barrel proteins into the outer membrane. This is Outer membrane protein assembly factor BamD from Caulobacter vibrioides (strain ATCC 19089 / CIP 103742 / CB 15) (Caulobacter crescentus).